Reading from the N-terminus, the 224-residue chain is Putative cytochrome c-type biogenesis protein DbsD-like (224 aa).

The next 5 helical transmembrane spans lie at 32–52 (FIFLSGLFTSLSPCIISILPV), 74–94 (FLFCLGTISSFITLGILATLI), 104–124 (GIPTISAVVIIYMGLNLLNIV), 150–170 (GIGIAISSCSTPIFVTLLVWI), and 176–196 (IFTGLIFILIYSIGYIFPIII).

The protein belongs to the DsbD family.

It is found in the plastid. The protein resides in the chloroplast membrane. Functionally, could be involved in cytochrome c synthesis. The polypeptide is Putative cytochrome c-type biogenesis protein DbsD-like (Pyropia yezoensis (Susabi-nori)).